The following is a 394-amino-acid chain: 1-deoxy-D-xylulose 5-phosphate reductoisomerase (394 aa).

NADPH is bound by residues T13, G14, S15, I16, and N127. K128 is a binding site for 1-deoxy-D-xylulose 5-phosphate. E129 is a binding site for NADPH. Residue D153 participates in Mn(2+) binding. 1-deoxy-D-xylulose 5-phosphate contacts are provided by S154, E155, S184, and H207. Residue E155 coordinates Mn(2+). G213 lines the NADPH pocket. The 1-deoxy-D-xylulose 5-phosphate site is built by S220, N225, K226, and E229. E229 is a Mn(2+) binding site.

This sequence belongs to the DXR family. Mg(2+) is required as a cofactor. Mn(2+) serves as cofactor.

The catalysed reaction is 2-C-methyl-D-erythritol 4-phosphate + NADP(+) = 1-deoxy-D-xylulose 5-phosphate + NADPH + H(+). The protein operates within isoprenoid biosynthesis; isopentenyl diphosphate biosynthesis via DXP pathway; isopentenyl diphosphate from 1-deoxy-D-xylulose 5-phosphate: step 1/6. Functionally, catalyzes the NADPH-dependent rearrangement and reduction of 1-deoxy-D-xylulose-5-phosphate (DXP) to 2-C-methyl-D-erythritol 4-phosphate (MEP). This is 1-deoxy-D-xylulose 5-phosphate reductoisomerase from Ectopseudomonas mendocina (strain ymp) (Pseudomonas mendocina).